A 230-amino-acid chain; its full sequence is AA9 family lytic polysaccharide monooxygenase H (230 aa).

The N-terminal stretch at M1 to A17 is a signal peptide. Cu(2+) contacts are provided by H18 and H89. C59 and C178 form a disulfide bridge. O2 contacts are provided by H164 and Q173. Y175 provides a ligand contact to Cu(2+).

It belongs to the polysaccharide monooxygenase AA9 family. Cu(2+) serves as cofactor.

The protein localises to the secreted. It carries out the reaction [(1-&gt;4)-beta-D-glucosyl]n+m + reduced acceptor + O2 = 4-dehydro-beta-D-glucosyl-[(1-&gt;4)-beta-D-glucosyl]n-1 + [(1-&gt;4)-beta-D-glucosyl]m + acceptor + H2O.. In terms of biological role, lytic polysaccharide monooxygenase (LPMO) that depolymerizes crystalline and amorphous polysaccharides via the oxidation of scissile alpha- or beta-(1-4)-glycosidic bonds, yielding primarly C1 oxidation products. Catalysis by LPMOs requires the reduction of the active-site copper from Cu(II) to Cu(I) by a reducing agent and H(2)O(2) or O(2) as a cosubstrate. Active on hemicelluloses, including xylan, glucomannan, and xyloglucan. Preferentially cleaves residual xylan in phosphoric acid-swollen cellulose (PASC). Moreover, when exposed to cellulose-xylan blends, shows a preference for xylan and for releasing oxidized xylooligosaccharides. Has no activity on ivory nut mannan (INM), a linear beta-1,4-linked mannan without substitutions. This chain is AA9 family lytic polysaccharide monooxygenase H, found in Malbranchea cinnamomea (Thermophilic fungus).